A 142-amino-acid chain; its full sequence is Hemoglobin subunit alpha (142 aa).

Residues 2-142 (VLSAADKTNV…VSTVLTSKYR (141 aa)) enclose the Globin domain. A Phosphoserine modification is found at Ser-4. Lys-8 is modified (N6-succinyllysine). The residue at position 9 (Thr-9) is a Phosphothreonine. Lys-12 carries the N6-succinyllysine modification. An N6-acetyllysine; alternate modification is found at Lys-17. Lys-17 is subject to N6-succinyllysine; alternate. The residue at position 25 (Tyr-25) is a Phosphotyrosine. An N6-succinyllysine modification is found at Lys-41. A Phosphoserine modification is found at Ser-50. Residue His-59 coordinates O2. His-88 serves as a coordination point for heme b. Ser-103 is subject to Phosphoserine. Phosphothreonine is present on Thr-109. Phosphoserine occurs at positions 125 and 132. Phosphothreonine is present on residues Thr-135 and Thr-138. Ser-139 is modified (phosphoserine).

This sequence belongs to the globin family. Heterotetramer of two alpha chains and two beta chains. Red blood cells.

Involved in oxygen transport from the lung to the various peripheral tissues. Functionally, hemopressin acts as an antagonist peptide of the cannabinoid receptor CNR1. Hemopressin-binding efficiently blocks cannabinoid receptor CNR1 and subsequent signaling. The protein is Hemoglobin subunit alpha (HBA) of Equus caballus (Horse).